We begin with the raw amino-acid sequence, 176 residues long: Parathyroid hormone-related protein (176 aa).

The first 25 residues, 1 to 25, serve as a signal peptide directing secretion; that stretch reads MMFTKLFQQWSFAVFLLSYSVPSYG. The propeptide occupies 26 to 37; the sequence is RSVEGISRRLKR. The interval 58–69 is important for receptor binding; that stretch reads RIFLQNLIEGVN. A disordered region spans residues 76–157; the sequence is TSEVSPNPKP…WLNSGMYGSN (82 aa). Composition is skewed to polar residues over residues 77–91 and 106–116; these read SEVS…NTKN and TQETNKSQTYK. Positions 109–130 match the Nuclear localization signal motif; the sequence is TNKSQTYKEQPLKVSGKKKKAK. Basic residues predominate over residues 123–133; it reads SGKKKKAKPGK.

This sequence belongs to the parathyroid hormone family.

The protein resides in the secreted. It is found in the cytoplasm. Its subcellular location is the nucleus. Its function is as follows. Neuroendocrine peptide which is a critical regulator of cellular and organ growth, development, migration, differentiation and survival and of epithelial calcium ion transport. Acts by binding to its receptor, PTH1R, activating G protein-coupled receptor signaling. Regulates endochondral bone development and epithelial-mesenchymal interactions during the formation of the mammary glands and teeth. Required for skeletal homeostasis. Functionally, potent inhibitor of osteoclastic bone resorption. The protein is Parathyroid hormone-related protein (PTHLH) of Gallus gallus (Chicken).